The primary structure comprises 72 residues: Delta-actitoxin-Avd2b 1 (72 aa).

Positions 1–21 (MMNRLLVFLMLGAAFMLVVSA) are cleaved as a signal peptide. Positions 22–42 (NDAYGDEPAFKDLNQGDESLG) are excised as a propeptide. Disulfide bonds link Cys-47/Cys-62, Cys-48/Cys-56, and Cys-50/Cys-67.

Belongs to the sea anemone short toxin (type III) family.

The protein resides in the secreted. It is found in the nematocyst. In terms of biological role, voltage-gated sodium channel (Nav) inhibitor. 1 uM completely inhibits insect voltage-gated sodium channel inactivation (DmNav1 from D.melanogaster). This is Delta-actitoxin-Avd2b 1 from Anemonia viridis (Snakelocks anemone).